Consider the following 247-residue polypeptide: ATP synthase subunit a, chloroplastic (247 aa).

5 helical membrane-spanning segments follow: residues 38–58, 95–115, 134–154, 199–219, and 220–240; these read QVLI…TVAV, VPFI…GALL, INTT…AGLT, LVVV…VMFL, and GLFT…AYIG.

The protein belongs to the ATPase A chain family. As to quaternary structure, F-type ATPases have 2 components, CF(1) - the catalytic core - and CF(0) - the membrane proton channel. CF(1) has five subunits: alpha(3), beta(3), gamma(1), delta(1), epsilon(1). CF(0) has four main subunits: a, b, b' and c.

It localises to the plastid. The protein localises to the chloroplast thylakoid membrane. Key component of the proton channel; it plays a direct role in the translocation of protons across the membrane. This Platanus occidentalis (Sycamore) protein is ATP synthase subunit a, chloroplastic.